Here is a 90-residue protein sequence, read N- to C-terminus: UPF0297 protein LVIS_1222 (90 aa).

Belongs to the UPF0297 family.

The chain is UPF0297 protein LVIS_1222 from Levilactobacillus brevis (strain ATCC 367 / BCRC 12310 / CIP 105137 / JCM 1170 / LMG 11437 / NCIMB 947 / NCTC 947) (Lactobacillus brevis).